The sequence spans 286 residues: Mitochondrial dicarboxylate carrier (286 aa).

3 Solcar repeats span residues Ser7 to Tyr87, Ser100 to Leu187, and Asp196 to His279. 3 consecutive transmembrane segments (helical) span residues Trp9 to Leu29, Gly62 to Tyr81, and Val102 to Val122. Lys158 is subject to N6-acetyllysine. The next 3 helical transmembrane spans lie at Gly162–Tyr181, Phe202–Leu222, and Gly254–Glu274.

The protein belongs to the mitochondrial carrier (TC 2.A.29) family. Expressed most strongly in liver, then kidney, and at lower levels in heart and brain.

The protein resides in the mitochondrion inner membrane. It carries out the reaction (S)-malate(in) + phosphate(out) = (S)-malate(out) + phosphate(in). It catalyses the reaction malonate(out) + (S)-malate(in) = malonate(in) + (S)-malate(out). The enzyme catalyses (S)-malate(in) + succinate(out) = (S)-malate(out) + succinate(in). The catalysed reaction is (S)-malate(in) + sulfate(out) = (S)-malate(out) + sulfate(in). It carries out the reaction malonate(out) + phosphate(in) = malonate(in) + phosphate(out). It catalyses the reaction succinate(out) + phosphate(in) = succinate(in) + phosphate(out). The enzyme catalyses sulfate(out) + phosphate(in) = sulfate(in) + phosphate(out). The catalysed reaction is malonate(out) + succinate(in) = malonate(in) + succinate(out). Catalyzes the electroneutral exchange or flux of physiologically important metabolites such as dicarboxylates (malonate, malate, succinate), inorganic sulfur-containing anions, and phosphate, across mitochondrial inner membrane. Plays an important role in gluconeogenesis, fatty acid metabolism, urea synthesis, and sulfur metabolism, particularly in liver, by supplying the substrates for the different metabolic processes. Regulates fatty acid release from adipocytes, and contributes to systemic insulin sensitivity. In Rattus norvegicus (Rat), this protein is Mitochondrial dicarboxylate carrier.